The primary structure comprises 105 residues: Large ribosomal subunit protein uL24 (105 aa).

This sequence belongs to the universal ribosomal protein uL24 family. As to quaternary structure, part of the 50S ribosomal subunit.

Functionally, one of two assembly initiator proteins, it binds directly to the 5'-end of the 23S rRNA, where it nucleates assembly of the 50S subunit. In terms of biological role, one of the proteins that surrounds the polypeptide exit tunnel on the outside of the subunit. The sequence is that of Large ribosomal subunit protein uL24 from Xylella fastidiosa (strain 9a5c).